A 259-amino-acid chain; its full sequence is 14-3-3-like protein (259 aa).

Positions 238-259 are disordered; the sequence is MQDPAAGDDREGADMKVEDAEP. A compositionally biased stretch (basic and acidic residues) spans 244 to 259; sequence GDDREGADMKVEDAEP.

The protein belongs to the 14-3-3 family.

The protein is 14-3-3-like protein of Chlamydomonas reinhardtii (Chlamydomonas smithii).